Here is a 251-residue protein sequence, read N- to C-terminus: MLTLEVCCYSLACAEIAQAAGADRIELCASQQDGGITPSYGTLVGCRERVSVPVHPIIRPRSGDFCYSDSEFALMKCDLALVRDLGFPGAVIGLLDEEGHIDLRRMGELMALAGPMAVTFHRAFDMCANPLQALSQLTDLGIARILTSGQQQTAEAGLPLLRQLQQASRGPLIMAGAGVRLSNLHKFSGIGLQEVHTSAGHCVPSTMRYRKAGVSMSHAENDEFSHYCVDGGMVEAMKSALQMMETVGCSI.

This sequence belongs to the CutC family.

The protein resides in the cytoplasm. The polypeptide is PF03932 family protein CutC (Edwardsiella ictaluri (strain 93-146)).